The primary structure comprises 967 residues: Serine/threonine-protein kinase/endoribonuclease ire-1 (967 aa).

Residues 1 to 21 form the signal peptide; it reads MRATFHLFTFIFLLLFSSVIC. Residues 22–438 are Lumenal-facing; sequence ISTPGFRNDH…LLLLNNHPIP (417 aa). 2 N-linked (GlcNAc...) asparagine glycosylation sites follow: Asn100 and Asn188. The chain crosses the membrane as a helical span at residues 439-455; the sequence is FYATLVTMFALLLTVIW. Over 456-967 the chain is Cytoplasmic; sequence QCGRQWDQQK…IKKKSNPNTD (512 aa). Positions 474-494 are disordered; that stretch reads EIVNNPGESRSAQTSKQSNRG. Residues 479–494 are compositionally biased toward polar residues; sequence PGESRSAQTSKQSNRG. The Protein kinase domain occupies 518-778; it reads YSPSDILGTG…ADAVLNHPFF (261 aa). Residues 524–532 and Lys546 contribute to the ATP site; that span reads LGTGCEGTV. Catalysis depends on Asp636, which acts as the Proton acceptor. A Phosphoserine; by autocatalysis modification is found at Ser672. Positions 781–909 constitute a KEN domain; the sequence is SEKRLAYFSD…EAVFKRYYSD (129 aa). The interval 948–967 is disordered; it reads RTPLKLDKRNIKKKSNPNTD. Positions 957-967 are enriched in basic residues; that stretch reads NIKKKSNPNTD.

This sequence belongs to the protein kinase superfamily. Ser/Thr protein kinase family. Mg(2+) serves as cofactor. Post-translationally, autophosphorylated mainly on serine residues.

The protein resides in the endoplasmic reticulum membrane. The catalysed reaction is L-seryl-[protein] + ATP = O-phospho-L-seryl-[protein] + ADP + H(+). It carries out the reaction L-threonyl-[protein] + ATP = O-phospho-L-threonyl-[protein] + ADP + H(+). The kinase domain is activated by trans-autophosphorylation. Kinase activity is required for activation of the endoribonuclease domain. In terms of biological role, senses unfolded proteins in the lumen of the endoplasmic reticulum via its N-terminal domain which leads to enzyme auto-activation. The active endoribonuclease domain splices xbp-1 precursor mRNA to produce the mature form which then induces transcription of UPR target genes. Unfolded protein response (UPR) transcriptional activation by ire-1, as well as translational attenuation by pek-1 in a complementary pathway, maintains ER homeostasis. Regulates the transcriptional up-regulation of nucleoside-diphosphatase apy-1 and many other genes, upon ER stress. By activating the UPR pathway during non-lethal hypoxia pre-conditioning, confers adaptive protection to subsequent exposure to hypoxia. ire-1 and pek-1 are redundant genes that control a pathway essential for larval development and survival. Plays a role in the nuclear retention of unspliced mRNAs. This is Serine/threonine-protein kinase/endoribonuclease ire-1 from Caenorhabditis elegans.